The chain runs to 621 residues: Pre-mRNA-processing protein 45 (621 aa).

Disordered regions lie at residues 1 to 73 (MSAT…YANG), 137 to 164 (SQRT…SNTE), 220 to 251 (AQRD…RSPP), 347 to 438 (RARE…ELRM), and 542 to 621 (GKND…EHDS). Residues 36–51 (PSTSSSSSALVSTSSP) are compositionally biased toward low complexity. Basic and acidic residues-rich tracts occupy residues 140 to 164 (TDIK…SNTE) and 220 to 229 (AQRDPLEPPR). The segment covering 239–248 (PPSPPPPVLR) has biased composition (pro residues). A compositionally biased stretch (basic and acidic residues) spans 364–380 (GRDDDVASRLADSDARP). A compositionally biased stretch (acidic residues) spans 403–417 (DSDESAASDEEDDEG). Composition is skewed to basic and acidic residues over residues 418–437 (ARER…RELR) and 594–621 (EDAK…EHDS).

Belongs to the SNW family. Associated with the spliceosome.

It localises to the nucleus. Its function is as follows. Involved in pre-mRNA splicing. The protein is Pre-mRNA-processing protein 45 (PRP45) of Mycosarcoma maydis (Corn smut fungus).